Here is a 175-residue protein sequence, read N- to C-terminus: Peptide methionine sulfoxide reductase MsrA (175 aa).

Cys-10 is an active-site residue.

This sequence belongs to the MsrA Met sulfoxide reductase family.

It catalyses the reaction L-methionyl-[protein] + [thioredoxin]-disulfide + H2O = L-methionyl-(S)-S-oxide-[protein] + [thioredoxin]-dithiol. It carries out the reaction [thioredoxin]-disulfide + L-methionine + H2O = L-methionine (S)-S-oxide + [thioredoxin]-dithiol. Functionally, has an important function as a repair enzyme for proteins that have been inactivated by oxidation. Catalyzes the reversible oxidation-reduction of methionine sulfoxide in proteins to methionine. In Clavibacter michiganensis subsp. michiganensis (strain NCPPB 382), this protein is Peptide methionine sulfoxide reductase MsrA.